We begin with the raw amino-acid sequence, 811 residues long: Elongation factor G, mitochondrial (811 aa).

Residues 1–64 (MSAIARAAAR…FQQSFQRRWA (64 aa)) constitute a mitochondrion transit peptide. One can recognise a tr-type G domain in the interval 96-394 (RRQRNVGISA…GVCAYLPNPS (299 aa)). Residues 105-112 (AHIDSGKT), 192-196 (DTPGH), and 246-249 (NKMD) each bind GTP.

This sequence belongs to the TRAFAC class translation factor GTPase superfamily. Classic translation factor GTPase family. EF-G/EF-2 subfamily.

It is found in the mitochondrion. It functions in the pathway protein biosynthesis; polypeptide chain elongation. Functionally, mitochondrial GTPase that catalyzes the GTP-dependent ribosomal translocation step during translation elongation. During this step, the ribosome changes from the pre-translocational (PRE) to the post-translocational (POST) state as the newly formed A-site-bound peptidyl-tRNA and P-site-bound deacylated tRNA move to the P and E sites, respectively. Catalyzes the coordinated movement of the two tRNA molecules, the mRNA and conformational changes in the ribosome. The sequence is that of Elongation factor G, mitochondrial from Cryptococcus neoformans var. neoformans serotype D (strain JEC21 / ATCC MYA-565) (Filobasidiella neoformans).